The chain runs to 306 residues: Small ribosomal subunit protein uS2 (306 aa).

Residues 229 to 238 (GEESAAEERP) are compositionally biased toward basic and acidic residues. The interval 229–306 (GEESAAEERP…VGEGDESEER (78 aa)) is disordered. The segment covering 261 to 287 (QPGEPEAEAFEEAAGEPEDSTEEEAAE) has biased composition (acidic residues).

Belongs to the universal ribosomal protein uS2 family.

The chain is Small ribosomal subunit protein uS2 from Rubrobacter xylanophilus (strain DSM 9941 / JCM 11954 / NBRC 16129 / PRD-1).